The sequence spans 259 residues: Indole-3-glycerol phosphate synthase (259 aa).

Belongs to the TrpC family.

It carries out the reaction 1-(2-carboxyphenylamino)-1-deoxy-D-ribulose 5-phosphate + H(+) = (1S,2R)-1-C-(indol-3-yl)glycerol 3-phosphate + CO2 + H2O. Its pathway is amino-acid biosynthesis; L-tryptophan biosynthesis; L-tryptophan from chorismate: step 4/5. In Dehalococcoides mccartyi (strain ATCC BAA-2100 / JCM 16839 / KCTC 5957 / BAV1), this protein is Indole-3-glycerol phosphate synthase.